Consider the following 191-residue polypeptide: Fe/S biogenesis protein NfuA (191 aa).

Residues Cys-149 and Cys-152 each coordinate [4Fe-4S] cluster.

Belongs to the NfuA family. Homodimer. [4Fe-4S] cluster serves as cofactor.

Functionally, involved in iron-sulfur cluster biogenesis. Binds a 4Fe-4S cluster, can transfer this cluster to apoproteins, and thereby intervenes in the maturation of Fe/S proteins. Could also act as a scaffold/chaperone for damaged Fe/S proteins. This chain is Fe/S biogenesis protein NfuA, found in Serratia proteamaculans (strain 568).